A 545-amino-acid polypeptide reads, in one-letter code: Capsular polysaccharide phosphotransferase SacB (545 aa).

Belongs to the stealth family.

In terms of biological role, part of a capsular biosynthesis operon and has been suggested to be the polymerase that links individual UDP-N-acetyl-D-mannosamine monomers. In serotype A the capsule is composed of repeated units of (alpha 1-6)-linked N-acetyl-D-mannosamine-1-phosphate. Non-polar disruption of this open reading frame prevented capsule synthesis. In Neisseria meningitidis serogroup A, this protein is Capsular polysaccharide phosphotransferase SacB (sacB).